Here is a 277-residue protein sequence, read N- to C-terminus: Probable diphthine methyl ester synthase (277 aa).

S-adenosyl-L-methionine contacts are provided by residues L9, D89, G92, 117-118, L168, L227, and H252; that span reads SV.

This sequence belongs to the diphthine synthase family.

It catalyses the reaction 2-[(3S)-amino-3-carboxypropyl]-L-histidyl-[translation elongation factor 2] + 4 S-adenosyl-L-methionine = diphthine methyl ester-[translation elongation factor 2] + 4 S-adenosyl-L-homocysteine + 3 H(+). Its pathway is protein modification; peptidyl-diphthamide biosynthesis. Its function is as follows. S-adenosyl-L-methionine-dependent methyltransferase that catalyzes four methylations of the modified target histidine residue in translation elongation factor 2 (EF-2), to form an intermediate called diphthine methyl ester. The four successive methylation reactions represent the second step of diphthamide biosynthesis. This chain is Probable diphthine methyl ester synthase, found in Arabidopsis thaliana (Mouse-ear cress).